The sequence spans 142 residues: Hemoglobin subunit alpha-A (142 aa).

A Globin domain is found at 2–142; sequence VLSAADKTNV…VGTVLTAKYR (141 aa). H59 serves as a coordination point for O2. Heme b is bound at residue H88.

Belongs to the globin family. In terms of assembly, heterotetramer of two alpha chains and two beta chains. As to expression, red blood cells.

Its function is as follows. Involved in oxygen transport from the lung to the various peripheral tissues. This Coturnix japonica (Japanese quail) protein is Hemoglobin subunit alpha-A (HBAA).